The chain runs to 101 residues: Small ribosomal subunit protein uS14 (101 aa).

It belongs to the universal ribosomal protein uS14 family. As to quaternary structure, part of the 30S ribosomal subunit. Contacts proteins S3 and S10.

Its function is as follows. Binds 16S rRNA, required for the assembly of 30S particles and may also be responsible for determining the conformation of the 16S rRNA at the A site. This Pelagibacter ubique (strain HTCC1062) protein is Small ribosomal subunit protein uS14.